Consider the following 356-residue polypeptide: Heat-inducible transcription repressor HrcA (356 aa).

Belongs to the HrcA family.

Negative regulator of class I heat shock genes (grpE-dnaK-dnaJ and groELS operons). Prevents heat-shock induction of these operons. This Chelativorans sp. (strain BNC1) protein is Heat-inducible transcription repressor HrcA.